Here is a 562-residue protein sequence, read N- to C-terminus: Dihydroxy-acid dehydratase 1 (562 aa).

Aspartate 80 contacts Mg(2+). A [2Fe-2S] cluster-binding site is contributed by cysteine 121. The Mg(2+) site is built by aspartate 122 and lysine 123. N6-carboxylysine is present on lysine 123. Cysteine 194 contributes to the [2Fe-2S] cluster binding site. Glutamate 446 lines the Mg(2+) pocket. The active-site Proton acceptor is the serine 472.

This sequence belongs to the IlvD/Edd family. In terms of assembly, homodimer. [2Fe-2S] cluster is required as a cofactor. The cofactor is Mg(2+).

It catalyses the reaction (2R)-2,3-dihydroxy-3-methylbutanoate = 3-methyl-2-oxobutanoate + H2O. The enzyme catalyses (2R,3R)-2,3-dihydroxy-3-methylpentanoate = (S)-3-methyl-2-oxopentanoate + H2O. It functions in the pathway amino-acid biosynthesis; L-isoleucine biosynthesis; L-isoleucine from 2-oxobutanoate: step 3/4. The protein operates within amino-acid biosynthesis; L-valine biosynthesis; L-valine from pyruvate: step 3/4. Functionally, functions in the biosynthesis of branched-chain amino acids. Catalyzes the dehydration of (2R,3R)-2,3-dihydroxy-3-methylpentanoate (2,3-dihydroxy-3-methylvalerate) into 2-oxo-3-methylpentanoate (2-oxo-3-methylvalerate) and of (2R)-2,3-dihydroxy-3-methylbutanoate (2,3-dihydroxyisovalerate) into 2-oxo-3-methylbutanoate (2-oxoisovalerate), the penultimate precursor to L-isoleucine and L-valine, respectively. The chain is Dihydroxy-acid dehydratase 1 from Staphylococcus saprophyticus subsp. saprophyticus (strain ATCC 15305 / DSM 20229 / NCIMB 8711 / NCTC 7292 / S-41).